A 284-amino-acid chain; its full sequence is D-tagatose-1,6-bisphosphate aldolase subunit GatY (284 aa).

Asp82 (proton donor) is an active-site residue. Zn(2+) is bound by residues His83 and His180. Gly181 lines the dihydroxyacetone phosphate pocket. His208 is a Zn(2+) binding site. Residues 209 to 211 and 230 to 233 each bind dihydroxyacetone phosphate; these read GAS and NVAT.

The protein belongs to the class II fructose-bisphosphate aldolase family. TagBP aldolase GatY subfamily. Forms a complex with GatZ. It depends on Zn(2+) as a cofactor.

The catalysed reaction is D-tagatofuranose 1,6-bisphosphate = D-glyceraldehyde 3-phosphate + dihydroxyacetone phosphate. Its pathway is carbohydrate metabolism; D-tagatose 6-phosphate degradation; D-glyceraldehyde 3-phosphate and glycerone phosphate from D-tagatose 6-phosphate: step 2/2. Functionally, catalytic subunit of the tagatose-1,6-bisphosphate aldolase GatYZ, which catalyzes the reversible aldol condensation of dihydroxyacetone phosphate (DHAP or glycerone-phosphate) with glyceraldehyde 3-phosphate (G3P) to produce tagatose 1,6-bisphosphate (TBP). Requires GatZ subunit for full activity and stability. Is involved in the catabolism of galactitol. This chain is D-tagatose-1,6-bisphosphate aldolase subunit GatY, found in Klebsiella pneumoniae subsp. pneumoniae (strain ATCC 700721 / MGH 78578).